Here is a 311-residue protein sequence, read N- to C-terminus: Aspartate carbamoyltransferase catalytic subunit (311 aa).

Positions 55 and 56 each coordinate carbamoyl phosphate. Residue lysine 85 coordinates L-aspartate. 3 residues coordinate carbamoyl phosphate: arginine 106, histidine 135, and glutamine 138. L-aspartate is bound by residues arginine 168 and arginine 230. Residues leucine 268 and proline 269 each contribute to the carbamoyl phosphate site.

This sequence belongs to the aspartate/ornithine carbamoyltransferase superfamily. ATCase family. In terms of assembly, heterododecamer (2C3:3R2) of six catalytic PyrB chains organized as two trimers (C3), and six regulatory PyrI chains organized as three dimers (R2).

It carries out the reaction carbamoyl phosphate + L-aspartate = N-carbamoyl-L-aspartate + phosphate + H(+). It participates in pyrimidine metabolism; UMP biosynthesis via de novo pathway; (S)-dihydroorotate from bicarbonate: step 2/3. Catalyzes the condensation of carbamoyl phosphate and aspartate to form carbamoyl aspartate and inorganic phosphate, the committed step in the de novo pyrimidine nucleotide biosynthesis pathway. The protein is Aspartate carbamoyltransferase catalytic subunit of Salmonella paratyphi A (strain AKU_12601).